The primary structure comprises 71 residues: Small ribosomal subunit protein bS18 (71 aa).

Belongs to the bacterial ribosomal protein bS18 family. As to quaternary structure, part of the 30S ribosomal subunit. Forms a tight heterodimer with protein bS6.

Binds as a heterodimer with protein bS6 to the central domain of the 16S rRNA, where it helps stabilize the platform of the 30S subunit. This is Small ribosomal subunit protein bS18 from Nostoc sp. (strain PCC 7120 / SAG 25.82 / UTEX 2576).